A 1609-amino-acid polypeptide reads, in one-letter code: Transmembrane protein 131-like (1609 aa).

A signal peptide spans 1-40; the sequence is MAGLRRPQPGCYCRTAAAVNLLLGVFQVLLPCCRPGGAQG. Over 41 to 869 the chain is Extracellular; sequence QAIEPLPNVV…VVPGPSWEES (829 aa). 6 N-linked (GlcNAc...) asparagine glycosylation sites follow: Asn-343, Asn-439, Asn-522, Asn-593, Asn-709, and Asn-846. Positions 696–916 are required for Wnt-signaling inhibition and LRP6 degradation; sequence DYGKVTSLIL…QNASSSSQQN (221 aa). Residues 870–890 traverse the membrane as a helical segment; the sequence is FWRLTVFFVSLSLLGVILIAF. Residues 891–1609 are Cytoplasmic-facing; that stretch reads QQAQYILMEF…SRDSSYCGNV (719 aa). Disordered stretches follow at residues 946-974, 991-1014, 1108-1144, 1159-1178, and 1304-1340; these read RGKN…YGHS, TAAA…SSLP, KTSK…NQQV, VDTK…EDMF, and SSSD…PMVD. A compositionally biased stretch (polar residues) spans 952–961; it reads PVNTPQSRIQ. Positions 991–1000 are enriched in low complexity; the sequence is TAAASSTSTT. A Phosphoserine modification is found at Ser-1122. Residues 1304–1331 show a composition bias toward low complexity; sequence SSSDCGSSSGSVRASRGSWGSWSSTSSS.

It belongs to the TMEM131 family. Expressed in thymocytes.

The protein localises to the cell membrane. It is found in the cytoplasm. Its subcellular location is the endoplasmic reticulum. In terms of biological role, membrane-associated form that antagonizes canonical Wnt signaling by triggering lysosome-dependent degradation of Wnt-activated LRP6. Regulates thymocyte proliferation. In Homo sapiens (Human), this protein is Transmembrane protein 131-like.